The chain runs to 1000 residues: Sop-2-related protein 1 (1000 aa).

3 disordered regions span residues Lys355–Gln374, His379–Glu422, and Ala466–Gly509. Positions Ser390–Ser404 are enriched in low complexity. Positions Ala406–Arg415 are enriched in basic and acidic residues. Residues Gly489–Gln502 are compositionally biased toward low complexity. Positions Arg633–Glu720 are RNA-binding. Positions His948–Thr1000 are disordered. Residues Asn960–Ala992 show a composition bias toward low complexity.

Binds through its N-terminal region to the N-terminal region of sop-2.

It is found in the nucleus. Its function is as follows. Acts synergistically with sop-2 to maintain the transcriptionally repressive state of homeotic genes throughout development. Not required to initiate repression, but to maintain it during later stages of development. Also required to repress expression of other genes. Binds RNA in a sequence-independent manner. In Caenorhabditis elegans, this protein is Sop-2-related protein 1 (sor-1).